The primary structure comprises 479 residues: Ribulose bisphosphate carboxylase large chain (479 aa).

The propeptide occupies 1–2 (MS). At Pro-3 the chain carries N-acetylproline. The residue at position 14 (Lys-14) is an N6,N6,N6-trimethyllysine. Substrate contacts are provided by Asn-123 and Thr-173. Residue Lys-175 is the Proton acceptor of the active site. Residue Lys-177 participates in substrate binding. The Mg(2+) site is built by Lys-201, Asp-203, and Glu-204. Position 201 is an N6-carboxylysine (Lys-201). The active-site Proton acceptor is the His-294. Substrate is bound by residues Arg-295, His-327, and Ser-379.

It belongs to the RuBisCO large chain family. Type I subfamily. In terms of assembly, heterohexadecamer of 8 large chains and 8 small chains; disulfide-linked. The disulfide link is formed within the large subunit homodimers. It depends on Mg(2+) as a cofactor. In terms of processing, the disulfide bond which can form in the large chain dimeric partners within the hexadecamer appears to be associated with oxidative stress and protein turnover.

Its subcellular location is the plastid. It is found in the chloroplast. The enzyme catalyses 2 (2R)-3-phosphoglycerate + 2 H(+) = D-ribulose 1,5-bisphosphate + CO2 + H2O. It catalyses the reaction D-ribulose 1,5-bisphosphate + O2 = 2-phosphoglycolate + (2R)-3-phosphoglycerate + 2 H(+). Its function is as follows. RuBisCO catalyzes two reactions: the carboxylation of D-ribulose 1,5-bisphosphate, the primary event in carbon dioxide fixation, as well as the oxidative fragmentation of the pentose substrate in the photorespiration process. Both reactions occur simultaneously and in competition at the same active site. The chain is Ribulose bisphosphate carboxylase large chain from Ananas comosus (Pineapple).